A 229-amino-acid polypeptide reads, in one-letter code: NADH dehydrogenase [ubiquinone] iron-sulfur protein 8, mitochondrial (229 aa).

The transit peptide at 1–41 (MAAILARKSLSALRSRQLVLAGHTIEGTNGYNRTLLGTRSF) directs the protein to the mitochondrion. 4Fe-4S ferredoxin-type domains follow at residues 121–150 (RRYA…IEAE) and 160–189 (TRYD…EGPN). Positions 130, 133, 136, 140, 169, 172, 175, and 179 each coordinate [4Fe-4S] cluster.

The protein belongs to the complex I 23 kDa subunit family. As to quaternary structure, complex I is composed of about 45 different subunits. This is a component of the iron-sulfur (IP) fragment of the enzyme. Requires [4Fe-4S] cluster as cofactor. Lowest expression found in storage tissues of tubers. Higher expression in older leaves than younger ones. Highest expression found in flowers.

The protein resides in the mitochondrion inner membrane. It carries out the reaction a ubiquinone + NADH + 5 H(+)(in) = a ubiquinol + NAD(+) + 4 H(+)(out). Functionally, core subunit of the mitochondrial membrane respiratory chain NADH dehydrogenase (Complex I) that is believed to belong to the minimal assembly required for catalysis. Complex I functions in the transfer of electrons from NADH to the respiratory chain. The immediate electron acceptor for the enzyme is believed to be ubiquinone. May donate electrons to ubiquinone. The chain is NADH dehydrogenase [ubiquinone] iron-sulfur protein 8, mitochondrial from Solanum tuberosum (Potato).